Here is a 575-residue protein sequence, read N- to C-terminus: Probable lysosomal cobalamin transporter (575 aa).

5 helical membrane passes run 8 to 28, 46 to 66, 95 to 115, 144 to 164, and 188 to 208; these read LIWVVYAVVVVVLFAVASVFI, IVAITSLLATILLLPVDVALV, LVYYILYSLDILLCLLVVPFV, YTLSFIAILIILFLVGVFVPI, and ALTFALGLLITIGMYVYALHT. An N-linked (GlcNAc...) asparagine glycan is attached at Asn233. A run of 4 helical transmembrane segments spans residues 314-334, 376-396, 420-440, and 504-524; these read LVGLILLLLVLLIWVSMILTA, AIFTMLVLLLFFGTVVGIATV, VMTAILMLSILALNYSISMIV, and FGAIFFWSQFAFIGVYLLALI. Residues 537–549 show a composition bias toward acidic residues; the sequence is QLDEDAEEAEEEA. The segment at 537–556 is disordered; sequence QLDEDAEEAEEEALLSGSRR.

Belongs to the LIMR family. LMBRD1 subfamily.

Its subcellular location is the lysosome membrane. In terms of biological role, probable lysosomal cobalamin transporter. Required to export cobalamin from lysosomes allowing its conversion to cofactors. The polypeptide is Probable lysosomal cobalamin transporter (Emericella nidulans (strain FGSC A4 / ATCC 38163 / CBS 112.46 / NRRL 194 / M139) (Aspergillus nidulans)).